The following is a 497-amino-acid chain: MAEFEEDLPHNGLMDGIASGVGVPVEALRLLLTILAGYPVAALYQKFISVIADKTVHHMFFAGCGAGLCYFNYGLDTYHSLIAILTTYFLVLLLRKKTQIFLAINFVFHMSYLLLGYFYTSSNDYDILWTMPHCILVLRMIGYGFDITDGLKEESELSKDQKETALKKPPSLLELLAFSYFPSGFLVGPQFPFRRYKAFVDGEFRQHEGNVEAGVRRFGAGAFYLIVCQVGLRYLPDSYFLTPEFAQVSFVKRIYLLGFWAKFSLYKYISCWLLTEGALICIGLTYKGEDKNGQPDWSGCSNVKLKLLETGNTMEHYVQSFNVNTNQWVGQYIYKRLKFLNNRTISYGAALGFLAVWHGYHSGYYMTFLMEYMVVSTEKQITRFYTKVVLPQWGHILNNSDIYKLLYFITLKSYNVVYMGWCLTAFVFLKYERWIVVYGAVSYYGFTFLVLWAAFYHTFNHFFRSSSRKLAGEDQKLQDSNTDKLVEEKKPEDKKSE.

The next 6 helical transmembrane spans lie at 31–51 (LLTI…ISVI), 74–94 (GLDT…VLLL), 100–120 (IFLA…YFYT), 173–193 (LELL…QFPF), 213–235 (AGVR…LRYL), and 264–286 (SLYK…GLTY). Catalysis depends on residues asparagine 322 and histidine 358. The chain crosses the membrane as a helical span at residues 339–361 (FLNNRTISYGAALGFLAVWHGYH). The N-linked (GlcNAc...) asparagine glycan is linked to asparagine 398. 2 consecutive transmembrane segments (helical) span residues 408–428 (FITL…AFVF) and 435–455 (IVVY…WAAF). Positions 469–497 (KLAGEDQKLQDSNTDKLVEEKKPEDKKSE) are disordered. Residues 470–497 (LAGEDQKLQDSNTDKLVEEKKPEDKKSE) show a composition bias toward basic and acidic residues. Phosphoserine is present on serine 480.

Belongs to the membrane-bound acyltransferase family. As to expression, during gastrulation, expressed mainly along the midline in the presumptive mesoderm. During germ band elongation, expressed in mesoderm and endoderm primordia and in the cephalic furrow. Expression in mesoderm and endoderm lineages continues during germ band shortening. At the end of this process, no longer detected in somatic mesoderm or endoderm layer with expression restricted to anterior and posterior domains of the visceral mesoderm.

It is found in the endoplasmic reticulum. The protein localises to the membrane. It catalyses the reaction a 1-acyl-sn-glycero-3-phospho-L-serine + an acyl-CoA = a 1,2-diacyl-sn-glycero-3-phospho-L-serine + CoA. The catalysed reaction is 1-(9Z-octadecenoyl)-sn-glycero-3-phospho-L-serine + (9Z)-hexadecenoyl-CoA = 1-(9Z-octadecenoyl)-2-(9Z-hexadecenoyl)-sn-glycero-3-phospho-L-serine + CoA. The enzyme catalyses a 1-acyl-sn-glycero-3-phosphocholine + an acyl-CoA = a 1,2-diacyl-sn-glycero-3-phosphocholine + CoA. It carries out the reaction 1-hexadecanoyl-sn-glycero-3-phosphocholine + (9Z)-octadecenoyl-CoA = 1-hexadecanoyl-2-(9Z-octadecenoyl)-sn-glycero-3-phosphocholine + CoA. It catalyses the reaction (9Z,12Z)-octadecadienoyl-CoA + 1-hexadecanoyl-sn-glycero-3-phosphocholine = 1-hexadecanoyl-2-(9Z,12Z-octadecadienoyl)-sn-glycero-3-phosphocholine + CoA. The catalysed reaction is (5Z,8Z,11Z,14Z)-eicosatetraenoyl-CoA + 1-hexadecanoyl-sn-glycero-3-phosphocholine = 1-hexadecanoyl-2-(5Z,8Z,11Z,14Z-eicosatetraenoyl)-sn-glycero-3-phosphocholine + CoA. The enzyme catalyses (9Z)-hexadecenoyl-CoA + 1-hexadecanoyl-sn-glycero-3-phosphocholine = 1-hexadecanoyl-2-(9Z-hexadecenoyl)-sn-glycero-3-phosphocholine + CoA. Its pathway is lipid metabolism; phospholipid metabolism. Functionally, acyltransferase that mediates the acylation of lysophospholipids to produce phospholipids (glycerophospholipids). Highest activity with lysophosphatidylcholine (1-acyl-sn-glycero-3-phosphocholine or LPC) producing phosphatidylcholine (1,2-diacyl-sn-glycero-3-phosphocholine or PC) (LPCAT activity), but also converts lysophosphatidylserine (1-acyl-2-hydroxy-sn-glycero-3-phospho-L-serine or LPS) to phosphatidylserine (1,2-diacyl-sn-glycero-3-phospho-L-serine or PS) (LPSAT activity). Has a preference for unsaturated fatty acids of at least 16 carbons such as oleoyl-CoA ((9Z)-octadecenoyl-CoA) and palmitoleoyl-CoA ((9Z)-hexadecenoyl-CoA). Glycerophospholipids are important structural and functional components of cellular membrane, acyl-chain remodeling regulates the molecular species distribution of glycerophospholipids which can affect membrane fluidity and curvature. Essential for fertility and viability together with Oysgedart (Oys). Required for germ cells to migrate into the mesoderm. In Drosophila melanogaster (Fruit fly), this protein is Lysophospholipid acyltransferase 5.